The sequence spans 309 residues: Ubiquitin domain-containing protein UBFD1 (309 aa).

Residues 1–80 (MAAAGAPDGM…VSNGEDAGGG (80 aa)) form a disordered region. The segment covering 9–19 (GMEEPGMDTEA) has biased composition (acidic residues). Low complexity predominate over residues 35 to 57 (EAEAAAGAAAEDSGAARGSLQPA). The Ubiquitin-like domain maps to 84–159 (ELVDLKIIWN…IMVVGSTIND (76 aa)). The disordered stretch occupies residues 171 to 204 (QQDAKAEENKKEPLCRQKQHRKVLDKGKPEDVMP). 2 stretches are compositionally biased toward basic and acidic residues: residues 174-185 (AKAEENKKEPLC) and 192-201 (KVLDKGKPED).

As to quaternary structure, binds polyubiquitin.

Functionally, may play a role as NF-kappa-B regulator. The chain is Ubiquitin domain-containing protein UBFD1 (UBFD1) from Homo sapiens (Human).